A 765-amino-acid chain; its full sequence is Phosphoribosylformylglycinamidine synthase subunit PurL (765 aa).

Over residues 1 to 13 the composition is skewed to polar residues; it reads MTVSPTSAPTQAI. Positions 1 to 32 are disordered; sequence MTVSPTSAPTQAIDTVERAATTPDEPQPFGEL. The active site involves histidine 65. ATP is bound by residues tyrosine 68 and lysine 112. Glutamate 114 serves as a coordination point for Mg(2+). Residues 115 to 118 and arginine 137 contribute to the substrate site; that span reads SHNH. Catalysis depends on histidine 116, which acts as the Proton acceptor. Position 138 (aspartate 138) interacts with Mg(2+). Position 263 (glutamine 263) interacts with substrate. A Mg(2+)-binding site is contributed by aspartate 291. 335-337 is a binding site for substrate; the sequence is ESQ. Asparagine 523 and glycine 560 together coordinate ATP. Residue asparagine 561 participates in Mg(2+) binding. Serine 563 lines the substrate pocket.

Belongs to the FGAMS family. In terms of assembly, monomer. Part of the FGAM synthase complex composed of 1 PurL, 1 PurQ and 2 PurS subunits.

Its subcellular location is the cytoplasm. It catalyses the reaction N(2)-formyl-N(1)-(5-phospho-beta-D-ribosyl)glycinamide + L-glutamine + ATP + H2O = 2-formamido-N(1)-(5-O-phospho-beta-D-ribosyl)acetamidine + L-glutamate + ADP + phosphate + H(+). The protein operates within purine metabolism; IMP biosynthesis via de novo pathway; 5-amino-1-(5-phospho-D-ribosyl)imidazole from N(2)-formyl-N(1)-(5-phospho-D-ribosyl)glycinamide: step 1/2. Functionally, part of the phosphoribosylformylglycinamidine synthase complex involved in the purines biosynthetic pathway. Catalyzes the ATP-dependent conversion of formylglycinamide ribonucleotide (FGAR) and glutamine to yield formylglycinamidine ribonucleotide (FGAM) and glutamate. The FGAM synthase complex is composed of three subunits. PurQ produces an ammonia molecule by converting glutamine to glutamate. PurL transfers the ammonia molecule to FGAR to form FGAM in an ATP-dependent manner. PurS interacts with PurQ and PurL and is thought to assist in the transfer of the ammonia molecule from PurQ to PurL. The chain is Phosphoribosylformylglycinamidine synthase subunit PurL from Mycobacterium avium (strain 104).